The following is a 230-amino-acid chain: Broad-specificity phosphatase YOR283W (230 aa).

His24 (tele-phosphohistidine intermediate) is an active-site residue. Substrate-binding positions include 36 to 37 (QG) and 102 to 105 (ERYM). The Proton donor/acceptor role is filled by Glu102.

The protein belongs to the phosphoglycerate mutase family. BPG-dependent PGAM subfamily.

It localises to the cytoplasm. The protein resides in the nucleus. In terms of biological role, metal-independent phosphatase active against a broad range of phosphorylated substrates including nucleoside tri- and diphosphates, phosphorylated organic acids, and amino acids. Shows no activity against phytic acid, phosphorylated carbohydrates, and nucleoside monophosphates. This Saccharomyces cerevisiae (strain ATCC 204508 / S288c) (Baker's yeast) protein is Broad-specificity phosphatase YOR283W.